A 51-amino-acid chain; its full sequence is MSKKYELYEVKDGKIVRKNPECVRCSHGIFMADHGDRYACGRCGYTQWKNE.

Residues Cys22, Cys25, Cys40, and Cys43 each coordinate Zn(2+). Residues 22 to 43 (CVRCSHGIFMADHGDRYACGRC) form a C4-type zinc finger.

The protein belongs to the eukaryotic ribosomal protein eS31 family. As to quaternary structure, part of the 30S ribosomal subunit. Zn(2+) is required as a cofactor.

In Methanosphaera stadtmanae (strain ATCC 43021 / DSM 3091 / JCM 11832 / MCB-3), this protein is Small ribosomal subunit protein eS31.